The chain runs to 411 residues: Serpin A3-1 (411 aa).

The N-terminal stretch at 1-24 is a signal peptide; the sequence is MRAERTSFLLALGLLVAGIRSVHC. N100, N180, N230, and N264 each carry an N-linked (GlcNAc...) asparagine glycan.

The protein belongs to the serpin family. As to quaternary structure, homodimer. Post-translationally, N-glycosylated. As to expression, detected in all tissues examined (at protein level). Abundantly expressed in liver, kidney and spleen. Lowest levels were observed in diaphragm muscle.

Its subcellular location is the cytoplasmic vesicle. The protein localises to the secretory vesicle. The protein resides in the chromaffin granule. It is found in the secreted. In terms of biological role, potent inhibitor of the serine proteases elastase and trypsin. Moderately inhibits the serine proteases plasmin and chymotrypsin, and the thiol protease proenkephalin-processing enzyme. Does not inhibit the serine proteases cathepsin G, furin, kallikrein, thrombin, tissue plasminogen activator and urokinase, or the cysteine proteases cathepsin B, cathepsin L and papain. The chain is Serpin A3-1 from Bos taurus (Bovine).